The chain runs to 191 residues: Elongation factor P (191 aa).

Lys34 carries the post-translational modification N6-(3,6-diaminohexanoyl)-5-hydroxylysine.

It belongs to the elongation factor P family. Post-translationally, may be beta-lysylated on the epsilon-amino group of Lys-34 by the combined action of EpmA and EpmB, and then hydroxylated on the C5 position of the same residue by EpmC (if this protein is present). Lysylation is critical for the stimulatory effect of EF-P on peptide-bond formation. The lysylation moiety may extend toward the peptidyltransferase center and stabilize the terminal 3-CCA end of the tRNA. Hydroxylation of the C5 position on Lys-34 may allow additional potential stabilizing hydrogen-bond interactions with the P-tRNA.

Its subcellular location is the cytoplasm. The protein operates within protein biosynthesis; polypeptide chain elongation. Functionally, involved in peptide bond synthesis. Alleviates ribosome stalling that occurs when 3 or more consecutive Pro residues or the sequence PPG is present in a protein, possibly by augmenting the peptidyl transferase activity of the ribosome. Modification of Lys-34 is required for alleviation. The protein is Elongation factor P of Colwellia psychrerythraea (strain 34H / ATCC BAA-681) (Vibrio psychroerythus).